The primary structure comprises 588 residues: Vicilin C72 (588 aa).

The N-terminal stretch at 1-25 is a signal peptide; it reads MVRNKSACVVLLFSLFLSFGLLCSA. Disordered regions lie at residues 159 to 183 and 460 to 487; these read REREEEAEEEETEEGEQEQSHNPFH and PRQSSFEEEEEQQQEQEQEEERRSGQYR. The span at 163–175 shows a compositional bias: acidic residues; it reads EEAEEEETEEGEQ. 2 consecutive Cupin type-1 domains span residues 182–340 and 386–566; these read FHFH…EQLD and FNLL…RLVD. Residues 465–478 show a composition bias toward acidic residues; sequence FEEEEEQQQEQEQE.

It belongs to the 7S seed storage protein family.

Its subcellular location is the vacuole. It localises to the aleurone grain. Its function is as follows. Seed storage protein. In Gossypium hirsutum (Upland cotton), this protein is Vicilin C72.